Here is a 388-residue protein sequence, read N- to C-terminus: NADH-quinone oxidoreductase subunit D 2 (388 aa).

Belongs to the complex I 49 kDa subunit family. NDH-1 is composed of 14 different subunits. Subunits NuoB, C, D, E, F, and G constitute the peripheral sector of the complex.

It is found in the cell inner membrane. It carries out the reaction a quinone + NADH + 5 H(+)(in) = a quinol + NAD(+) + 4 H(+)(out). Its function is as follows. NDH-1 shuttles electrons from NADH, via FMN and iron-sulfur (Fe-S) centers, to quinones in the respiratory chain. The immediate electron acceptor for the enzyme in this species is believed to be ubiquinone. Couples the redox reaction to proton translocation (for every two electrons transferred, four hydrogen ions are translocated across the cytoplasmic membrane), and thus conserves the redox energy in a proton gradient. The polypeptide is NADH-quinone oxidoreductase subunit D 2 (Sorangium cellulosum (strain So ce56) (Polyangium cellulosum (strain So ce56))).